Consider the following 217-residue polypeptide: Urease accessory protein UreE (217 aa).

The segment at Ala148–His217 is disordered. Over residues Ala160–Gly171 the composition is skewed to basic and acidic residues. A compositionally biased stretch (low complexity) spans Ala193–Gly202. Residues Gly206–His217 show a composition bias toward basic and acidic residues.

It belongs to the UreE family.

The protein localises to the cytoplasm. Involved in urease metallocenter assembly. Binds nickel. Probably functions as a nickel donor during metallocenter assembly. In Methylibium petroleiphilum (strain ATCC BAA-1232 / LMG 22953 / PM1), this protein is Urease accessory protein UreE.